Here is a 375-residue protein sequence, read N- to C-terminus: Serpin B5 (375 aa).

Residues Asn133, Asn298, and Asn361 are each glycosylated (N-linked (GlcNAc...) asparagine).

This sequence belongs to the serpin family. Ov-serpin subfamily. As to quaternary structure, interacts with IRF6.

It is found in the secreted. The protein resides in the extracellular space. Functionally, tumor suppressor. It blocks the growth, invasion, and metastatic properties of mammary tumors. As it does not undergo the S (stressed) to R (relaxed) conformational transition characteristic of active serpins, it exhibits no serine protease inhibitory activity. The sequence is that of Serpin B5 (Serpinb5) from Mus musculus (Mouse).